The primary structure comprises 213 residues: Putative manganese efflux pump MntP (213 aa).

6 consecutive transmembrane segments (helical) span residues 3–23 (ILSI…VSVA), 36–56 (ALKV…IGWG), 67–87 (AFDH…MIFE), 130–150 (LAIA…FLGI), 152–172 (IVQT…LGVI), and 187–207 (IVGG…HTGI).

It belongs to the MntP (TC 9.B.29) family.

It is found in the cell membrane. Functionally, probably functions as a manganese efflux pump. The polypeptide is Putative manganese efflux pump MntP (Clostridium perfringens (strain 13 / Type A)).